The chain runs to 66 residues: Large ribosomal subunit protein bL35 (66 aa).

Positions 1–16 (MPKMKTHRGAAKRVKR) are enriched in basic residues. Positions 1-28 (MPKMKTHRGAAKRVKRTGSGQLKRSRAF) are disordered.

The protein belongs to the bacterial ribosomal protein bL35 family.

This is Large ribosomal subunit protein bL35 from Staphylococcus epidermidis (strain ATCC 35984 / DSM 28319 / BCRC 17069 / CCUG 31568 / BM 3577 / RP62A).